Here is a 216-residue protein sequence, read N- to C-terminus: Uracil phosphoribosyltransferase (216 aa).

Residues R84, R109, and 137 to 145 (DPMLATGGS) each bind 5-phospho-alpha-D-ribose 1-diphosphate. Uracil contacts are provided by residues I202 and 207–209 (GDA). D208 is a 5-phospho-alpha-D-ribose 1-diphosphate binding site.

The protein belongs to the UPRTase family. It depends on Mg(2+) as a cofactor.

The catalysed reaction is UMP + diphosphate = 5-phospho-alpha-D-ribose 1-diphosphate + uracil. It functions in the pathway pyrimidine metabolism; UMP biosynthesis via salvage pathway; UMP from uracil: step 1/1. Allosterically activated by GTP. Functionally, catalyzes the conversion of uracil and 5-phospho-alpha-D-ribose 1-diphosphate (PRPP) to UMP and diphosphate. The sequence is that of Uracil phosphoribosyltransferase from Nostoc sp. (strain PCC 7120 / SAG 25.82 / UTEX 2576).